The primary structure comprises 599 residues: Leishmanolysin (599 aa).

An N-terminal signal peptide occupies residues 1-39; the sequence is MSVDSSSTHRHRSVAARLVRLAAAGAAVIAAVGTAAAWA. The propeptide at 40–97 is activation peptide; it reads HAGAVQHRCIHDAMQARVRQSVARHHTAPGAVSAVGLPYVTLDTAAAADRRPGSAPTV. 2 disulfides stabilise this stretch: Cys-122/Cys-139 and Cys-188/Cys-227. His-261 contacts Zn(2+). Glu-262 is an active-site residue. His-265 serves as a coordination point for Zn(2+). N-linked (GlcNAc...) asparagine glycosylation occurs at Asn-297. Disulfide bonds link Cys-311–Cys-383, Cys-390–Cys-452, Cys-403–Cys-422, Cys-412–Cys-486, Cys-463–Cys-507, Cys-512–Cys-562, and Cys-532–Cys-555. His-331 contributes to the Zn(2+) binding site. A glycan (N-linked (GlcNAc...) asparagine) is linked at Asn-394. Asn-574 carries the GPI-anchor amidated asparagine lipid modification. Residues 575–599 constitute a propeptide, removed in mature form; sequence AAAGRRGPRAAATALLVAALLAVAL.

This sequence belongs to the peptidase M8 family. Zn(2+) serves as cofactor.

Its subcellular location is the cell membrane. It catalyses the reaction Preference for hydrophobic residues at P1 and P1' and basic residues at P2' and P3'. A model nonapeptide is cleaved at -Ala-Tyr-|-Leu-Lys-Lys-.. Functionally, has an integral role during the infection of macrophages in the mammalian host. The sequence is that of Leishmanolysin (gp63) from Leishmania chagasi.